A 642-amino-acid chain; its full sequence is Palmitoyltransferase akr1 (642 aa).

6 ANK repeats span residues 1–29 (MGSL…DVNA), 33–62 (GGAT…DVNA), 67–96 (LQAA…DPLL), 100–129 (QGFN…SVDL), 133–162 (QQHT…DVLA), and 166–196 (DKMT…PCTA). Over 1-256 (MGSLFLAASQ…SKFQFSQKTF (256 aa)) the chain is Cytoplasmic. Helical transmembrane passes span 257 to 277 (IIFC…IMSI) and 278 to 298 (CPMV…FKYI). Residues 299-316 (TTCIHANIDIVHFYLETP) are Cytoplasmic-facing. Residues 317-337 (FLAGIFSSIFFWVWCHSLLYI) traverse the membrane as a helical segment. The Lumenal segment spans residues 338-343 (VPKTLP). The chain crosses the membrane as a helical span at residues 344–364 (IKPLSSLLFVLISFTCIGLYV). At 365-444 (RTAFQNPGYV…NCVGARNHRT (80 aa)) the chain is on the cytoplasmic side. Residues 400-450 (HYCLKCFQVKPPRSYHCGACKRCINRYDHHCPWTGNCVGARNHRTFLLFVF) enclose the DHHC domain. The active-site S-palmitoyl cysteine intermediate is the cysteine 430. A helical membrane pass occupies residues 445 to 465 (FLLFVFTLSTLIPIYFYVAFY). The Lumenal portion of the chain corresponds to 466–496 (YLQNIPIQKKYESYRCLFISGTICQWSLKDM). The helical transmembrane segment at 497 to 517 (FVLVASLTLFVNWCWVVVLAF) threads the bilayer. The Cytoplasmic segment spans residues 518–642 (TQICQVAHNV…GRQDEATRHV (125 aa)).

The protein belongs to the DHHC palmitoyltransferase family. AKR/ZDHHC17 subfamily.

The protein resides in the early endosome membrane. Its subcellular location is the golgi apparatus membrane. It carries out the reaction L-cysteinyl-[protein] + hexadecanoyl-CoA = S-hexadecanoyl-L-cysteinyl-[protein] + CoA. Its function is as follows. Palmitoyltransferase specific for casein kinase 1. This is Palmitoyltransferase akr1 (akr1) from Schizosaccharomyces pombe (strain 972 / ATCC 24843) (Fission yeast).